A 555-amino-acid polypeptide reads, in one-letter code: Glutamate--tRNA ligase (555 aa).

The 'HIGH' region signature appears at 100–110; sequence PNPSGPLHIGH.

The protein belongs to the class-I aminoacyl-tRNA synthetase family. Glutamate--tRNA ligase type 2 subfamily.

The protein localises to the cytoplasm. The enzyme catalyses tRNA(Glu) + L-glutamate + ATP = L-glutamyl-tRNA(Glu) + AMP + diphosphate. Functionally, catalyzes the attachment of glutamate to tRNA(Glu) in a two-step reaction: glutamate is first activated by ATP to form Glu-AMP and then transferred to the acceptor end of tRNA(Glu). The sequence is that of Glutamate--tRNA ligase from Methanococcus maripaludis (strain C6 / ATCC BAA-1332).